The chain runs to 51 residues: Putative inactivation escape 1 protein (51 aa).

In terms of tissue distribution, highly expressed in pancreas, heart and liver followed by brain, placenta, lung, skeletal muscle and kidney. Mostly expressed in females.

The polypeptide is Putative inactivation escape 1 protein (INE1) (Homo sapiens (Human)).